Reading from the N-terminus, the 181-residue chain is MMDNRGNSSLPDKLPIFPDSARLPLTRSFYLEPMVTFHVHPEAPVSSPYSEELPRLPFPSDSLILGNYSEPCPFSFPMPYPNYRGCEYSYGPAFTRKRNERERQRVKCVNEGYAQLRHHLPEEYLEKRLSKVETLRAAIKYINYLQSLLYPDKAETKNNPGKVSSMIATTSHHADPMFRIV.

The interval 93–106 (AFTRKRNERERQRV) is basic motif. One can recognise a bHLH domain in the interval 93–145 (AFTRKRNERERQRVKCVNEGYAQLRHHLPEEYLEKRLSKVETLRAAIKYINYL). The interval 107-145 (KCVNEGYAQLRHHLPEEYLEKRLSKVETLRAAIKYINYL) is helix-loop-helix motif.

In terms of assembly, efficient DNA binding requires dimerization with another bHLH protein. Widely expressed in fetal and adult tissues.

It is found in the nucleus. In terms of biological role, transcriptional repressor. Inhibits myogenesis. Plays a role in progenitor cells which differentiate into ductal and acinar, but not myoepithelial, cell lineages in the salivary glands. Involved in the functions of the microvillar cells and Bowman's glands and probably, in a non-cell-autonomous manner, in the development or regeneration of a complete olfactory epithelium (OE). The protein is Achaete-scute homolog 3 of Homo sapiens (Human).